Consider the following 250-residue polypeptide: MAQLKLEDLLKSGAHFGHLTRRWCPKMKPYIFMEKNGIHIIDLKKTVSLADDALNAVGAIASTGKEILFVGTKKQAKAIVAEQAERAGMPYVAERWLGGMLTNFSTIRQSIRRLNSIERMEIDGTFDMITKKERLMLMREKEKLVRVLGGISKMTRLPAAIFLIDVKKEHIAVREAYSLGIPIFAIVDTNCDPEFIDYVIPANDDAIRSIELITSSVADAIIDATAVQKDDEDAAATNLASEAQDEKSEA.

This sequence belongs to the universal ribosomal protein uS2 family.

The polypeptide is Small ribosomal subunit protein uS2 (Chloroherpeton thalassium (strain ATCC 35110 / GB-78)).